A 364-amino-acid polypeptide reads, in one-letter code: Abhydrolase domain-containing protein C57A10.08c (364 aa).

Over 1 to 8 the chain is Cytoplasmic; it reads MYFFTISR. Residues 9–29 form a helical; Signal-anchor for type II membrane protein membrane-spanning segment; sequence LTSFISYGILGALGILTFLYL. Residues 30–364 lie on the Lumenal side of the membrane; that stretch reads YDAYLAKSFQ…DKFSTTDHNI (335 aa). Ser-183 (charge relay system) is an active-site residue. Asn-326 is a glycosylation site (N-linked (GlcNAc...) asparagine). The Charge relay system role is filled by His-336.

Belongs to the AB hydrolase superfamily.

It localises to the endoplasmic reticulum membrane. This is Abhydrolase domain-containing protein C57A10.08c from Schizosaccharomyces pombe (strain 972 / ATCC 24843) (Fission yeast).